Consider the following 388-residue polypeptide: bZIP transcription factor 1-D (388 aa).

Disordered regions lie at residues 1 to 49 (MGSS…PIPP), 103 to 249 (FAPY…GPTT), 261 to 316 (TASS…RKQA), and 348 to 388 (ELLS…KDTN). Low complexity-rich tracts occupy residues 23–33 (PPATSSTATPT) and 117–129 (AAGT…TAGG). Residues 169-179 (SGASANGTISQ) show a composition bias toward polar residues. Residues 180–193 (SGESGSESSSEGSE) show a composition bias toward low complexity. Polar residues predominate over residues 214-231 (RSSQNGVSPSPSQAQLKQ). The bZIP domain maps to 293–356 (ELKRQKRKQS…DELLSKNSSL (64 aa)). The interval 295-314 (KRQKRKQSNRDSARRSRLRK) is basic motif. Residues 302–316 (SNRDSARRSRLRKQA) show a composition bias toward basic and acidic residues. Residues 321-356 (LAQRAEVLKQENASLKDEVSRIRKEYDELLSKNSSL) are leucine-zipper. Basic and acidic residues-rich tracts occupy residues 359 to 369 (NVGDKQHKTDE) and 375 to 388 (KLQH…KDTN).

The protein belongs to the bZIP family. Highly expressed in roots and at lower levels in stems and leaves.

The protein localises to the nucleus. Its function is as follows. Probable transcription factor that may be involved in responses to fungal pathogen infection and abiotic stresses. This Triticum aestivum (Wheat) protein is bZIP transcription factor 1-D.